A 143-amino-acid polypeptide reads, in one-letter code: Large-conductance mechanosensitive channel (143 aa).

3 helical membrane-spanning segments follow: residues 16–36, 40–60, and 87–107; these read VMDL…TNSL, IIMP…NMFI, and GSFI…FMMV.

It belongs to the MscL family. In terms of assembly, homopentamer.

The protein resides in the cell inner membrane. Functionally, channel that opens in response to stretch forces in the membrane lipid bilayer. May participate in the regulation of osmotic pressure changes within the cell. The protein is Large-conductance mechanosensitive channel of Psychrobacter sp. (strain PRwf-1).